The sequence spans 365 residues: Chorismate synthase (365 aa).

R46 contributes to the NADP(+) binding site. FMN contacts are provided by residues 124 to 126 (RAS), G284, 299 to 303 (KPTPS), and R326.

This sequence belongs to the chorismate synthase family. Requires FMNH2 as cofactor.

It carries out the reaction 5-O-(1-carboxyvinyl)-3-phosphoshikimate = chorismate + phosphate. It functions in the pathway metabolic intermediate biosynthesis; chorismate biosynthesis; chorismate from D-erythrose 4-phosphate and phosphoenolpyruvate: step 7/7. Its function is as follows. Catalyzes the anti-1,4-elimination of the C-3 phosphate and the C-6 proR hydrogen from 5-enolpyruvylshikimate-3-phosphate (EPSP) to yield chorismate, which is the branch point compound that serves as the starting substrate for the three terminal pathways of aromatic amino acid biosynthesis. This reaction introduces a second double bond into the aromatic ring system. The sequence is that of Chorismate synthase from Pyrobaculum neutrophilum (strain DSM 2338 / JCM 9278 / NBRC 100436 / V24Sta) (Thermoproteus neutrophilus).